The sequence spans 294 residues: Putative deoxyribonuclease TATDN3 (294 aa).

Residues His-9, His-11, Glu-104, His-144, His-167, and Asp-215 each coordinate Zn(2+).

Belongs to the metallo-dependent hydrolases superfamily. TatD-type hydrolase family. Requires Mn(2+) as cofactor. Ca(2+) serves as cofactor. It depends on Mg(2+) as a cofactor. The cofactor is Zn(2+).

The protein resides in the nucleus. The 3'-exonuclease activity is sensitive to the metal ion present in the active site, whereas the AP endodeoxyribonuclease activity is observed in a variety of divalent metal cofactors. 3'-exoxonuclease activity is suppressed in the presence of Ca(2+), Zn(2+) and Ni(2+). Its function is as follows. Exhibits 3'-exonuclease activities and apurinic/apyrimidinic (AP) endonuclease (in vitro). Show preferential AP endonuclease activity on double-stranded DNA substrates and 3'- exonuclease activity on single-stranded DNA. In Mus musculus (Mouse), this protein is Putative deoxyribonuclease TATDN3 (Tatdn3).